Consider the following 335-residue polypeptide: (+)-caryolan-1-ol synthase (335 aa).

The Mg(2+) site is built by Asp-83, Asp-87, Asn-220, Ser-224, and Glu-228. The short motif at 83 to 87 (DDEFD) is the DDXXD motif element. The NSE/DTE motif signature appears at 220–228 (NDICSFEKE).

The protein belongs to the terpene synthase family. It depends on Mg(2+) as a cofactor. Mn(2+) serves as cofactor.

The enzyme catalyses (2E,6E)-farnesyl diphosphate = (+)-(E)-beta-caryophyllene + diphosphate. It carries out the reaction (+)-(E)-beta-caryophyllene + H2O = (+)-caryolan-1-ol. It functions in the pathway secondary metabolite biosynthesis; terpenoid biosynthesis. In terms of biological role, sesquiterpene cyclase that first catalyzes the cyclization of farnesyl diphosphate (FPP) to the bicyclic sesquiterpene (+)-beta-caryophyllene intermediate, and then its conversion to (+)-caryolan-1-ol via a second cyclization and the addition of a water molecule. This chain is (+)-caryolan-1-ol synthase (gcoA), found in Streptomyces griseus subsp. griseus (strain JCM 4626 / CBS 651.72 / NBRC 13350 / KCC S-0626 / ISP 5235).